Reading from the N-terminus, the 632-residue chain is Chaperone protein DnaK (632 aa).

Thr-198 bears the Phosphothreonine; by autocatalysis mark.

Belongs to the heat shock protein 70 family.

Functionally, acts as a chaperone. The protein is Chaperone protein DnaK of Rhodopseudomonas palustris (strain BisB18).